The following is a 347-amino-acid chain: NADH-ubiquinone oxidoreductase chain 2 (347 aa).

Helical transmembrane passes span 13 to 33, 59 to 79, 96 to 116, 122 to 142, 149 to 169, 178 to 198, 201 to 221, 247 to 267, 274 to 294, and 323 to 343; these read IILGTMIVMTSSHWLLVWIGF, YFLTQATASMLLMLAVVTNLL, AVMTLALVMKLGLSPFHFWVP, IPLSSGLVLLTWQKLAPLSVL, VSPTLLLTVSLMSIAVGGWGG, ILAYSSIAHMGWMTAVLAYNP, TLLNLTLYILMTTTTFLLFMF, IMLSLGGLPPLTGFLPKWMII, ESLLLPTLMAMMALLSLYFYM, and VPLLPPMITLFTLALPLAPAL.

The protein belongs to the complex I subunit 2 family. In terms of assembly, core subunit of respiratory chain NADH dehydrogenase (Complex I) which is composed of 45 different subunits. Interacts with TMEM242.

The protein localises to the mitochondrion inner membrane. The catalysed reaction is a ubiquinone + NADH + 5 H(+)(in) = a ubiquinol + NAD(+) + 4 H(+)(out). Functionally, core subunit of the mitochondrial membrane respiratory chain NADH dehydrogenase (Complex I) which catalyzes electron transfer from NADH through the respiratory chain, using ubiquinone as an electron acceptor. Essential for the catalytic activity and assembly of complex I. The chain is NADH-ubiquinone oxidoreductase chain 2 from Megaderma spasma (Lesser false vampire bat).